The following is a 431-amino-acid chain: Keratin, type I cytoskeletal 40 (431 aa).

Residues 1 to 89 (MTSDCSSTHC…CEDGVFTSNE (89 aa)) form a head region. The region spanning 89–400 (EKETMQFLND…GLLDSEDSRL (312 aa)) is the IF rod domain. The tract at residues 90 to 124 (KETMQFLNDRLASYLEKVRSLEETNAELESRIQEQ) is coil 1A. Positions 125–135 (CEQDIPMVCPD) are linker 1. The coil 1B stretch occupies residues 136 to 236 (YQRYFNTIED…HEEEVNLLRE (101 aa)). The interval 237-252 (QLGDRLSVELDTAPTL) is linker 12. A coil 2 region spans residues 253–396 (DLNRVLDEMR…NTYWGLLDSE (144 aa)). A tail region spans residues 397-431 (DSRLSCSPCSTTCTSSNTCEPCSAYVICTVENCCL).

It belongs to the intermediate filament family. As to quaternary structure, heterotetramer of two type I and two type II keratins. In terms of tissue distribution, expressed in skin and scalp. Also very weakly expressed in tongue, breast, colon and small intestine. In the hair follicle, it is specifically present in the upper hair cuticle. Not present in the upper cortex (at protein level).

In terms of biological role, may play a role in late hair differentiation. The sequence is that of Keratin, type I cytoskeletal 40 (KRT40) from Homo sapiens (Human).